Reading from the N-terminus, the 160-residue chain is Troponin C, skeletal muscle (160 aa).

EF-hand domains are found at residues 15 to 50 (EMIA…LGQN), 51 to 86 (PTRE…QLKE), 91 to 126 (KSEE…SGEP), and 127 to 160 (VSEE…ENIQ). Ca(2+) contacts are provided by Asp-28, Asp-30, Asp-34, Glu-39, Asp-64, Asp-66, Ser-68, Thr-70, Glu-75, Asp-104, Asn-106, Asp-108, Glu-115, Asp-140, Asn-142, Asp-144, Lys-146, and Glu-151.

It belongs to the troponin C family.

Functionally, troponin is the central regulatory protein of striated muscle contraction. Tn consists of three components: Tn-I which is the inhibitor of actomyosin ATPase, Tn-T which contains the binding EF-hand for tropomyosin and Tn-C. The binding of calcium to Tn-C abolishes the inhibitory action of Tn on actin filaments. This is Troponin C, skeletal muscle from Anguilla anguilla (European freshwater eel).